A 449-amino-acid chain; its full sequence is N-succinylarginine dihydrolase (449 aa).

Substrate contacts are provided by residues 19–28, asparagine 110, and 137–138; these read GGLSYGNVAS and HR. Residues 23–43 are disordered; sequence YGNVASQSNSQQASNPREAAR. Over residues 27–37 the composition is skewed to low complexity; sequence ASQSNSQQASN. Glutamate 174 is an active-site residue. Arginine 214 provides a ligand contact to substrate. Residue histidine 250 is part of the active site. The substrate site is built by aspartate 252 and asparagine 365. Catalysis depends on cysteine 371, which acts as the Nucleophile.

The protein belongs to the succinylarginine dihydrolase family. Homodimer.

The enzyme catalyses N(2)-succinyl-L-arginine + 2 H2O + 2 H(+) = N(2)-succinyl-L-ornithine + 2 NH4(+) + CO2. Its pathway is amino-acid degradation; L-arginine degradation via AST pathway; L-glutamate and succinate from L-arginine: step 2/5. Functionally, catalyzes the hydrolysis of N(2)-succinylarginine into N(2)-succinylornithine, ammonia and CO(2). In Pseudomonas putida (strain ATCC 700007 / DSM 6899 / JCM 31910 / BCRC 17059 / LMG 24140 / F1), this protein is N-succinylarginine dihydrolase.